A 453-amino-acid polypeptide reads, in one-letter code: Glutamyl-tRNA reductase (453 aa).

Substrate-binding positions include T54–R57, S113, E118–Q120, and Q124. C55 acts as the Nucleophile in catalysis. G193–S198 contacts NADP(+).

It belongs to the glutamyl-tRNA reductase family. Homodimer.

It catalyses the reaction (S)-4-amino-5-oxopentanoate + tRNA(Glu) + NADP(+) = L-glutamyl-tRNA(Glu) + NADPH + H(+). The protein operates within porphyrin-containing compound metabolism; protoporphyrin-IX biosynthesis; 5-aminolevulinate from L-glutamyl-tRNA(Glu): step 1/2. It functions in the pathway porphyrin-containing compound metabolism; chlorophyll biosynthesis. Catalyzes the NADPH-dependent reduction of glutamyl-tRNA(Glu) to glutamate 1-semialdehyde (GSA). The protein is Glutamyl-tRNA reductase of Chloroflexus aggregans (strain MD-66 / DSM 9485).